The following is a 467-amino-acid chain: ATP synthase subunit beta (467 aa).

154-161 serves as a coordination point for ATP; sequence GGAGVGKT.

It belongs to the ATPase alpha/beta chains family. As to quaternary structure, F-type ATPases have 2 components, CF(1) - the catalytic core - and CF(0) - the membrane proton channel. CF(1) has five subunits: alpha(3), beta(3), gamma(1), delta(1), epsilon(1). CF(0) has three main subunits: a(1), b(2) and c(9-12). The alpha and beta chains form an alternating ring which encloses part of the gamma chain. CF(1) is attached to CF(0) by a central stalk formed by the gamma and epsilon chains, while a peripheral stalk is formed by the delta and b chains.

Its subcellular location is the cell inner membrane. It carries out the reaction ATP + H2O + 4 H(+)(in) = ADP + phosphate + 5 H(+)(out). Functionally, produces ATP from ADP in the presence of a proton gradient across the membrane. The catalytic sites are hosted primarily by the beta subunits. In Leptospira interrogans serogroup Icterohaemorrhagiae serovar copenhageni (strain Fiocruz L1-130), this protein is ATP synthase subunit beta.